The sequence spans 4912 residues: Probable E3 ubiquitin-protein ligase HERC2 (4912 aa).

The segment at 1–67 is disordered; the sequence is MFNRQASGGA…GSGSAAPPSH (67 aa). A compositionally biased stretch (gly residues) spans 8–17; that stretch reads GGAGSSGQGA. A compositionally biased stretch (low complexity) spans 18-31; the sequence is GSSQTASAAPVSAG. 2 stretches are compositionally biased toward gly residues: residues 32–41 and 49–59; these read VGVGGGGGAS and SAAGSGSGSGS. 5 RCC1 repeats span residues 634–685, 686–739, 741–789, 791–843, and 844–897; these read NHNA…AITC, GGNL…ALTS, GLVF…ALSS, GQLY…ALSS, and SGEV…VWTQ. Disordered stretches follow at residues 1102–1129, 1428–1475, and 1659–1681; these read RLSP…STSP, QLLQ…PGRG, and QEQE…EEET. Over residues 1446–1458 the composition is skewed to polar residues; the sequence is SHSCHSTAGNTPT. Threonine 1776 carries the phosphothreonine modification. The region spanning 1917 to 1990 is the MIB/HERC2 domain; sequence SGPDLAKLMK…QYDLQLADSA (74 aa). Disordered stretches follow at residues 1994–2018 and 2381–2412; these read ASPT…SHPS and GSIY…SGSG. Positions 2396-2412 are enriched in polar residues; it reads ESQQPGEQDQQLSSGSG. The UBA domain maps to 2511 to 2557; it reads ATDAQLIGQIMEMGFTRRTVELALKQLSLQAEIMPTPEQIVQWILEH. The segment at 2572–2620 is disordered; sequence LASSASSHDPEADSDNECPSSNSTTSSSTSSDTVEGQPMAVSGPAPPVK. Residues 2591–2604 are compositionally biased toward low complexity; it reads SSNSTTSSSTSSDT. In terms of domain architecture, CPH spans 2624–2699; it reads RKDFQTADLY…VCFVHIELVE (76 aa). The DOC domain occupies 2780–2958; it reads TSATLPSLGD…FLASEYSAGV (179 aa). RCC1 repeat units follow at residues 2985–3036, 3037–3090, 3091–3142, 3144–3194, 3197–3248, 3250–3300, and 3302–3352; these read PCTV…IVSQ, DGKV…ALTL, DGKV…AISS, GELY…TLAL, DGAV…ALTR, GEVW…AVTD, and GQVY…AWGL. Disordered stretches follow at residues 3352–3374 and 3953–4000; these read LPNA…RDPL and LPSS…EQPD. A compositionally biased stretch (low complexity) spans 3974 to 3988; that stretch reads LNSTTSLSSSTVSNV. 7 RCC1 repeats span residues 4049 to 4099, 4101 to 4153, 4155 to 4205, 4207 to 4259, 4261 to 4311, 4313 to 4363, and 4365 to 4415; these read STIY…AVTP, GKLF…ALTT, GEVY…AITA, GHVL…CITD, DNVW…ALTK, GAVY…ACSD, and GEVY…ALST. The region spanning 4547-4882 is the HECT domain; sequence ALALPHRVWK…IHFCKSIDTD (336 aa). Cysteine 4850 functions as the Glycyl thioester intermediate in the catalytic mechanism. The tract at residues 4891–4912 is disordered; the sequence is EPTEATGSEDNSDLESVASHEG.

Its subcellular location is the cytoplasm. It is found in the cytoskeleton. The protein resides in the microtubule organizing center. It localises to the centrosome. The protein localises to the centriole. The catalysed reaction is S-ubiquitinyl-[E2 ubiquitin-conjugating enzyme]-L-cysteine + [acceptor protein]-L-lysine = [E2 ubiquitin-conjugating enzyme]-L-cysteine + N(6)-ubiquitinyl-[acceptor protein]-L-lysine.. Its pathway is protein modification; protein ubiquitination. Functionally, probable E3 ubiquitin-protein ligase which accepts ubiquitin from an E2 ubiquitin-conjugating enzyme in the form of a thioester and then directly transfers the ubiquitin to targeted substrates. The protein is Probable E3 ubiquitin-protein ligase HERC2 (HERC2) of Drosophila melanogaster (Fruit fly).